Reading from the N-terminus, the 557-residue chain is T-complex protein 1 subunit eta (557 aa).

Position 2 is an N-acetylalanine (Ala-2). The disordered stretch occupies residues 529-557 (PKSESAQGDAAGAMGRGRGGGRGRGMRRR). The span at 547-557 (GGGRGRGMRRR) shows a compositional bias: basic residues.

This sequence belongs to the TCP-1 chaperonin family. Heterooligomeric complex of about 850 to 900 kDa that forms two stacked rings, 12 to 16 nm in diameter. Interacts with KNAT1.

Its subcellular location is the cytoplasm. Molecular chaperone; assists the folding of proteins upon ATP hydrolysis. Known to play a role, in vitro, in the folding of actin and tubulin. This Arabidopsis thaliana (Mouse-ear cress) protein is T-complex protein 1 subunit eta.